A 217-amino-acid polypeptide reads, in one-letter code: Protein-L-isoaspartate O-methyltransferase (217 aa).

S61 is a catalytic residue.

It belongs to the methyltransferase superfamily. L-isoaspartyl/D-aspartyl protein methyltransferase family.

The protein localises to the cytoplasm. It carries out the reaction [protein]-L-isoaspartate + S-adenosyl-L-methionine = [protein]-L-isoaspartate alpha-methyl ester + S-adenosyl-L-homocysteine. In terms of biological role, catalyzes the methyl esterification of L-isoaspartyl residues in peptides and proteins that result from spontaneous decomposition of normal L-aspartyl and L-asparaginyl residues. It plays a role in the repair and/or degradation of damaged proteins. This is Protein-L-isoaspartate O-methyltransferase from Syntrophotalea carbinolica (strain DSM 2380 / NBRC 103641 / GraBd1) (Pelobacter carbinolicus).